The chain runs to 597 residues: Elongation factor 4 (597 aa).

One can recognise a tr-type G domain in the interval 2 to 184 (KHIRNFSIIA…NIVTAIPPPE (183 aa)). GTP is bound by residues 14-19 (DHGKST) and 131-134 (NKID).

It belongs to the TRAFAC class translation factor GTPase superfamily. Classic translation factor GTPase family. LepA subfamily.

It localises to the cell inner membrane. It catalyses the reaction GTP + H2O = GDP + phosphate + H(+). In terms of biological role, required for accurate and efficient protein synthesis under certain stress conditions. May act as a fidelity factor of the translation reaction, by catalyzing a one-codon backward translocation of tRNAs on improperly translocated ribosomes. Back-translocation proceeds from a post-translocation (POST) complex to a pre-translocation (PRE) complex, thus giving elongation factor G a second chance to translocate the tRNAs correctly. Binds to ribosomes in a GTP-dependent manner. In Vibrio atlanticus (strain LGP32) (Vibrio splendidus (strain Mel32)), this protein is Elongation factor 4.